The following is a 385-amino-acid chain: Protein pelota homolog (385 aa).

It belongs to the eukaryotic release factor 1 family. Pelota subfamily. Component of the Pelota-HBS1L complex, also named Dom34-Hbs1 complex, composed of PELO and HBS1L. A divalent metal cation is required as a cofactor.

The protein resides in the cytoplasm. Component of the Pelota-HBS1L complex, a complex that recognizes stalled ribosomes and triggers the No-Go Decay (NGD) pathway. In the Pelota-HBS1L complex, PELO recognizes ribosomes stalled at the 3' end of an mRNA and engages stalled ribosomes by destabilizing mRNA in the mRNA channel. Following mRNA extraction from stalled ribosomes by the SKI complex, the Pelota-HBS1L complex promotes recruitment of ABCE1, which drives the disassembly of stalled ribosomes, followed by degradation of damaged mRNAs as part of the NGD pathway. This is Protein pelota homolog (PELO) from Gallus gallus (Chicken).